The primary structure comprises 519 residues: MQLERILTETNIERSKFKQYKVLSKYINAVAKKYTLNNVSNKYGKVLFIKDGVVKVSGLSQIKIGEKVEFVGKNLFGMALNLEATSVGIVIFGEDTAIYEGVIVKRCEQNFAIKVDKTMLGRVVDVLGQPIDGLGELKDTKTTRVMSVERKAPGIVTRKSVHESMLTGVKMVDALLPIGRGQRELIIGDRQTGKSAIAVDAILNQQVNKDIVCIYVAVGQKKSTVRRLVEMLNTKGALEYTIVVVSTASDAAPLQFLAPYTGCTIGEYFRDEGKHALIVYDDLSKHAVAYRQMSLLLRRPPGREAYPGDVFYIHSRLLERAAKLNEKYGCGSLTAFPIVETQAGDVSAYIPTNIISITDGQIFLEKELFNKGIRPAVNVGLSVSRVGSAAQSAVMKKLAGALKLELAQYRELARFEQFSSNADAVTTQILKKGKLTIELLKQVNNNPMAVGMEALMIFAMSTSYFQNLDLSLVRAEEAKLLQYIHSVSSFKLYAACVDAVKAFNPKDTVFTEMCQSYVK.

188-195 (GDRQTGKS) contacts ATP.

It belongs to the ATPase alpha/beta chains family. In terms of assembly, F-type ATPases have 2 components, CF(1) - the catalytic core - and CF(0) - the membrane proton channel. CF(1) has five subunits: alpha(3), beta(3), gamma(1), delta(1), epsilon(1). CF(0) has three main subunits: a, b and c.

The protein resides in the mitochondrion. Its subcellular location is the mitochondrion inner membrane. In terms of biological role, mitochondrial membrane ATP synthase (F(1)F(0) ATP synthase or Complex V) produces ATP from ADP in the presence of a proton gradient across the membrane which is generated by electron transport complexes of the respiratory chain. F-type ATPases consist of two structural domains, F(1) - containing the extramembraneous catalytic core, and F(0) - containing the membrane proton channel, linked together by a central stalk and a peripheral stalk. During catalysis, ATP synthesis in the catalytic domain of F(1) is coupled via a rotary mechanism of the central stalk subunits to proton translocation. Subunits alpha and beta form the catalytic core in F(1). Rotation of the central stalk against the surrounding alpha(3)beta(3) subunits leads to hydrolysis of ATP in three separate catalytic sites on the beta subunits. Subunit alpha does not bear the catalytic high-affinity ATP-binding sites. The polypeptide is ATP synthase subunit alpha, mitochondrial (atp1) (Dictyostelium citrinum (Slime mold)).